We begin with the raw amino-acid sequence, 357 residues long: Probable leucine aminopeptidase TRV_02148.1 (357 aa).

Positions 1 to 15 (MKVLAALALSALAMA) are cleaved as a signal peptide. N76 carries N-linked (GlcNAc...) asparagine glycosylation. Positions 167 and 185 each coordinate Zn(2+). The segment at 169 to 188 (DSINGKNPQGEAPGADDNGS) is disordered. An N-linked (GlcNAc...) asparagine glycan is attached at N186. Zn(2+)-binding residues include E224 and D251. N269 carries N-linked (GlcNAc...) asparagine glycosylation. The cysteines at positions 291 and 295 are disulfide-linked. H324 serves as a coordination point for Zn(2+).

It belongs to the peptidase M28 family. M28E subfamily. As to quaternary structure, monomer. It depends on Zn(2+) as a cofactor.

It localises to the secreted. Functionally, probable extracellular aminopeptidase which contributes to pathogenicity. This Trichophyton verrucosum (strain HKI 0517) protein is Probable leucine aminopeptidase TRV_02148.1.